The following is a 309-amino-acid chain: MTLMKPRLSREMAEAIAAGSPVVALESTIITHGMPYPANLETALGVETVIRENGAIPATIAVVKGELRVGLEHDELEELAQSKGIVKASGRDLAVAMIRGQSAGTTVSATMLMADLAGIDVFATGGVGGVHRGAEQTFDISADLTELGRTKTAVVCAGVKSILDIAKTLEYLETQRVPVIAYGTEDFPAFFTRRSGFKADHRLDTPEEIAKAMWLHHQLGTGTGLLIANPIPEASALAPDFIDGTIADAVRDADERGIDRKELTPFLLARINELTKGESLKANIELVKNNARLAARIAVAYAPLKKARN.

The active-site Proton donor is Glu-26. Residues Lys-87 and Val-107 each coordinate substrate. Mn(2+) is bound at residue Asp-139. Ser-141–Asp-143 serves as a coordination point for substrate. Lys-160 acts as the Nucleophile in catalysis.

It belongs to the pseudouridine-5'-phosphate glycosidase family. In terms of assembly, homotrimer. It depends on Mn(2+) as a cofactor.

It catalyses the reaction D-ribose 5-phosphate + uracil = psi-UMP + H2O. Catalyzes the reversible cleavage of pseudouridine 5'-phosphate (PsiMP) to ribose 5-phosphate and uracil. Functions biologically in the cleavage direction, as part of a pseudouridine degradation pathway. This chain is Pseudouridine-5'-phosphate glycosidase 2, found in Rhizobium johnstonii (strain DSM 114642 / LMG 32736 / 3841) (Rhizobium leguminosarum bv. viciae).